The following is a 192-amino-acid chain: A-type ATP synthase subunit E (192 aa).

A disordered region spans residues 1–66 (MSLDTVVEDI…QERDQKLSSA (66 aa)). The span at 8–26 (EDIRDEARARADEIRSEGE) shows a compositional bias: basic and acidic residues. Residues 27-49 (ERAEEIIDEAEREADDIVDEAER) are compositionally biased toward acidic residues. Residues 50-66 (EAERKISQERDQKLSSA) are compositionally biased toward basic and acidic residues.

This sequence belongs to the V-ATPase E subunit family. Has multiple subunits with at least A(3), B(3), C, D, E, F, H, I and proteolipid K(x).

The protein localises to the cell membrane. Component of the A-type ATP synthase that produces ATP from ADP in the presence of a proton gradient across the membrane. The protein is A-type ATP synthase subunit E of Natronomonas pharaonis (strain ATCC 35678 / DSM 2160 / CIP 103997 / JCM 8858 / NBRC 14720 / NCIMB 2260 / Gabara) (Halobacterium pharaonis).